A 308-amino-acid chain; its full sequence is Endonuclease G, mitochondrial (308 aa).

Catalysis depends on His148, which acts as the Proton acceptor. Asn180 provides a ligand contact to Mg(2+).

The protein belongs to the DNA/RNA non-specific endonuclease family. As to quaternary structure, homodimer; disulfide-linked. Interacts with crn-5, crn-4, crn-1 and cyn-13. It depends on Mg(2+) as a cofactor.

The protein resides in the mitochondrion. In terms of biological role, endonuclease important for programmed cell death; it mediates apoptotic DNA fragmentation. The polypeptide is Endonuclease G, mitochondrial (cps-6) (Caenorhabditis elegans).